We begin with the raw amino-acid sequence, 236 residues long: Endonuclease V (236 aa).

Residues Asp47 and Asp115 each coordinate Mg(2+).

This sequence belongs to the endonuclease V family. Requires Mg(2+) as cofactor.

It localises to the cytoplasm. It catalyses the reaction Endonucleolytic cleavage at apurinic or apyrimidinic sites to products with a 5'-phosphate.. In terms of biological role, DNA repair enzyme involved in the repair of deaminated bases. Selectively cleaves double-stranded DNA at the second phosphodiester bond 3' to a deoxyinosine leaving behind the intact lesion on the nicked DNA. In Xanthomonas campestris pv. campestris (strain 8004), this protein is Endonuclease V.